An 831-amino-acid chain; its full sequence is DNA ligase (831 aa).

Residues 34 to 38 (DADYD), 83 to 84 (SL), and Glu-114 contribute to the NAD(+) site. Lys-116 (N6-AMP-lysine intermediate) is an active-site residue. Arg-137, Glu-174, Lys-291, and Lys-315 together coordinate NAD(+). The Zn(2+) site is built by Cys-409, Cys-412, Cys-427, and Cys-433. Residues 749 to 831 (AHTAPLNGQS…LDFLEQYSAQ (83 aa)) enclose the BRCT domain.

It belongs to the NAD-dependent DNA ligase family. LigA subfamily. Requires Mg(2+) as cofactor. Mn(2+) is required as a cofactor.

It catalyses the reaction NAD(+) + (deoxyribonucleotide)n-3'-hydroxyl + 5'-phospho-(deoxyribonucleotide)m = (deoxyribonucleotide)n+m + AMP + beta-nicotinamide D-nucleotide.. Its function is as follows. DNA ligase that catalyzes the formation of phosphodiester linkages between 5'-phosphoryl and 3'-hydroxyl groups in double-stranded DNA using NAD as a coenzyme and as the energy source for the reaction. It is essential for DNA replication and repair of damaged DNA. The sequence is that of DNA ligase from Xylella fastidiosa (strain M12).